The following is a 485-amino-acid chain: Ribulose bisphosphate carboxylase large chain (485 aa).

Asn124 and Thr174 together coordinate substrate. Lys176 serves as the catalytic Proton acceptor. Lys178 lines the substrate pocket. Mg(2+) is bound by residues Lys202, Asp204, and Glu205. Lys202 bears the N6-carboxylysine mark. The active-site Proton acceptor is the His294. Substrate-binding residues include Arg295, His327, and Ser379.

This sequence belongs to the RuBisCO large chain family. Type I subfamily. In terms of assembly, heterohexadecamer of 8 large chains and 8 small chains. Mg(2+) is required as a cofactor.

It carries out the reaction 2 (2R)-3-phosphoglycerate + 2 H(+) = D-ribulose 1,5-bisphosphate + CO2 + H2O. The catalysed reaction is D-ribulose 1,5-bisphosphate + O2 = 2-phosphoglycolate + (2R)-3-phosphoglycerate + 2 H(+). Its function is as follows. RuBisCO catalyzes two reactions: the carboxylation of D-ribulose 1,5-bisphosphate, the primary event in carbon dioxide fixation, as well as the oxidative fragmentation of the pentose substrate. Both reactions occur simultaneously and in competition at the same active site. This is Ribulose bisphosphate carboxylase large chain from Rhodopseudomonas palustris (strain TIE-1).